Consider the following 198-residue polypeptide: Zinc finger protein 41 homolog (198 aa).

The span at 1–12 shows a compositional bias: basic residues; sequence MEKPAGRKKKTP. A disordered region spans residues 1 to 55; that stretch reads MEKPAGRKKKTPTPREEADVQKSALREEKVSGDRKPPERPTVPRKPRTEPCLSPE. A compositionally biased stretch (basic and acidic residues) spans 13 to 38; it reads TPREEADVQKSALREEKVSGDRKPPE. 4 C2H2-type zinc fingers span residues 87–109, 115–137, 143–165, and 171–193; these read YECSECGRIFKHKTDHIRHQRVH, FKCAQCGKAFRHSSDVTKHQRTH, FKCGECGKAFNCGSNLLKHQKTH, and YECTHCGKAFAYSSCLIRHQKRH.

The protein belongs to the krueppel C2H2-type zinc-finger protein family.

Its subcellular location is the nucleus. A putative DNA-binding regulatory protein associated with meiosis in spermatogenesis. In Homo sapiens (Human), this protein is Zinc finger protein 41 homolog (ZFP41).